A 249-amino-acid chain; its full sequence is MVDSKKTETPQVVDASKKAENSKTSQAGRIQFLSAPKQFSASDVRSSPSLADLDEIAYEVRTTSIASPAEIEAVCQLWIRNTEIPADKVALIAIDMARAYADVGASRKAVLLDAPTLAPTVARSRLAQLKAGAGISPRQFCSYYAKIVWNLMLHKNEPPANWAKIGFKEDYKFAAFDFFDAVDSPAALEPSQWVRHPTDKERAAHGVVKWASLSRERLQEGTSITTVAELNKGHLGGYNNLPALMAPPS.

Residues 1 to 28 form a disordered region; that stretch reads MVDSKKTETPQVVDASKKAENSKTSQAG.

It belongs to the potexvirus capsid protein family.

The protein localises to the virion. Required for genome encapsidation. Forms ribonucleoprotein complexes along with TGB1 helicase and viral RNA. In Solanum tuberosum (Potato), this protein is Coat protein.